We begin with the raw amino-acid sequence, 257 residues long: Zinc transporter ZupT (257 aa).

3 helical membrane passes run 5–25 (LILT…GVLG), 32–52 (LLAF…LMEM), and 61–81 (GMSP…YFGL). Fe(2+)-binding residues include Asn-120 and Glu-123. 2 residues coordinate Zn(2+): Glu-123 and His-148. Helical transmembrane passes span 137–157 (LGFG…LAVA), 171–191 (ILWA…AWLI), 195–215 (MISP…MVAL), and 236–256 (GVLC…TAGI). Fe(2+)-binding residues include Asn-149, Glu-152, and Glu-181. Zn(2+) is bound at residue Glu-152.

The protein belongs to the ZIP transporter (TC 2.A.5) family. ZupT subfamily.

The protein localises to the cell inner membrane. It catalyses the reaction Zn(2+)(in) = Zn(2+)(out). In terms of biological role, mediates zinc uptake. May also transport other divalent cations. The chain is Zinc transporter ZupT from Escherichia coli O7:K1 (strain IAI39 / ExPEC).